The sequence spans 410 residues: MSIVQAKFEAKETSFHVEGYEKIEYDLVYVDGIFEIQNSALADVYQGFGRCLAIVDANVSRLYGNQIQAYFQYYGIELRLFPITITEPDKTIQTFERVIDVFADFKLVRKEPVLVVGGGLITDVVGFACSTYRRSSNYIRIPTTLIGLIDASVAIKVAVNHRKLKNRLGAYHASRKVFLDFSLLRTLPTDQVRNGMAELVKIAVVAHQEVFELLEKYGEELLRTHFGNIDATPEIKEIAHRLTYKAIHKMLELEVPNLHELDLDRVIAYGHTWSPTLELAPRLPMFHGHAVNVDMAFSATIAARRGYITIAERDRILGLMSRVGLSLDHPMLDIDILWRGTESITLTRDGLLRAAMPKPIGDCVFVNDLTREELAAALADHKELCTSYPRGGEGVDVYPVYQKELIGSVK.

Residues 56-58, 87-90, 119-123, 143-144, Lys156, Lys165, and 183-186 each bind NAD(+); these read DAN, EPDK, GLITD, TT, and LLRT. Positions 198, 271, and 287 each coordinate Zn(2+).

Belongs to the sugar phosphate cyclases superfamily. DDGS family. In terms of assembly, homodimer. NAD(+) is required as a cofactor. The cofactor is Co(2+). Requires Zn(2+) as cofactor.

It catalyses the reaction D-sedoheptulose 7-phosphate = (R)-demethyl-4-deoxygadusol + phosphate + H2O + H(+). Its function is as follows. Catalyzes the conversion of sedoheptulose 7-phosphate to demethyl-4-deoxygadusol (DDG). Involved in the synthesis of the mycosporine-like amino acid shinorine, a natural sunscreen compound that protects the cell against UV radiation. In Trichormus variabilis (strain ATCC 29413 / PCC 7937) (Anabaena variabilis), this protein is Demethyl-4-deoxygadusol synthase.